The primary structure comprises 58 residues: Potassium channel toxin Ts16 (58 aa).

The N-terminal stretch at 1 to 16 (MHSSVFILILFSLAVI) is a signal peptide. Cystine bridges form between C29–C51, C34–C47, and C38–C53.

Expressed by the venom gland.

It localises to the secreted. Blocks potassium channels. In Tityus serrulatus (Brazilian scorpion), this protein is Potassium channel toxin Ts16.